We begin with the raw amino-acid sequence, 230 residues long: MIRSKEPHNNLCLLYNQGLMPYLDAHRWQRSLLNERIHDPSLDDVLILLEHPPVYTLGQGSNSDFIKFDIDQGEYDVHRVERGGEVTYHCPGQLVGYPILNLQRYRKDLHWYLRQLEEVIIRVLTVYGLQGERIPAFTGVWLQGRKVAAIGIKVSRWITMHGFALNVCPDMKGFERIVPCGISDKPVGSLAEWIPGITCQEVRFYVAQCFAEVFGVELIESQPQDFFRPE.

One can recognise a BPL/LPL catalytic domain in the interval 40 to 218; that stretch reads PSLDDVLILL…CFAEVFGVEL (179 aa). Residues 82–89, 149–151, and 162–164 contribute to the substrate site; these read RGGEVTYH, AIG, and GFA. Cys-180 (acyl-thioester intermediate) is an active-site residue.

The protein belongs to the LipB family.

The protein resides in the cytoplasm. The catalysed reaction is octanoyl-[ACP] + L-lysyl-[protein] = N(6)-octanoyl-L-lysyl-[protein] + holo-[ACP] + H(+). The protein operates within protein modification; protein lipoylation via endogenous pathway; protein N(6)-(lipoyl)lysine from octanoyl-[acyl-carrier-protein]: step 1/2. In terms of biological role, catalyzes the transfer of endogenously produced octanoic acid from octanoyl-acyl-carrier-protein onto the lipoyl domains of lipoate-dependent enzymes. Lipoyl-ACP can also act as a substrate although octanoyl-ACP is likely to be the physiological substrate. The sequence is that of Octanoyltransferase from Nostoc punctiforme (strain ATCC 29133 / PCC 73102).